The primary structure comprises 242 residues: Ras-like protein family member 11A (242 aa).

A small GTPase-like region spans residues 17-241; it reads ESSSDYLLPK…SPKVKAPSAL (225 aa). Residues 34-41, 81-85, and 147-150 each bind GTP; these read GAGRVGKS, DTPGG, and NKGD.

It belongs to the small GTPase superfamily. Ras family. Interacts with UBF/UBTF. In terms of tissue distribution, widely expressed. Down-regulated in prostate tumors compared to normal prostate tissue. High levels found in colon tumor and normal colon tissue followed by small intestine, liver, jejunum, ileum, bladder and aorta. Lowest levels observed in endothelial cells.

The protein localises to the nucleus. The protein resides in the nucleolus. The enzyme catalyses GTP + H2O = GDP + phosphate + H(+). In terms of biological role, regulator of rDNA transcription. Acts in cooperation UBF/UBTF and positively regulates RNA polymerase I transcription. The polypeptide is Ras-like protein family member 11A (Homo sapiens (Human)).